Reading from the N-terminus, the 146-residue chain is Metallothiol transferase FosB (146 aa).

In terms of domain architecture, VOC spans 4 to 120 (GINHMTFSVS…DGHLLEVHTG (117 aa)). Positions 7, 66, and 116 each coordinate Mg(2+). E116 functions as the Proton donor/acceptor in the catalytic mechanism.

Belongs to the fosfomycin resistance protein family. FosB subfamily. As to quaternary structure, homodimer. Mg(2+) serves as cofactor.

It is found in the cytoplasm. Metallothiol transferase which confers resistance to fosfomycin by catalyzing the addition of a thiol cofactor to fosfomycin. L-cysteine is probably the physiological thiol donor. The polypeptide is Metallothiol transferase FosB (Shouchella clausii (strain KSM-K16) (Alkalihalobacillus clausii)).